The following is an 82-amino-acid chain: Envelope small membrane protein (82 aa).

At 1-16 (MLPFVQEQIGAFIVNF) the chain is on the virion surface side. Residues 17–37 (FILSVVCAVTLVVCLAILTAI) form a helical membrane-spanning segment. Over 38-78 (RLCVQCVSGCHTLVFLPAVHIYNTGRAAYVKFQESHPPYPP) the chain is Intravirion.

It belongs to the betacoronaviruses E protein family. Homopentamer. Interacts with membrane protein M in the budding compartment of the host cell, which is located between endoplasmic reticulum and the Golgi complex. Interacts with Nucleoprotein.

The protein resides in the host Golgi apparatus membrane. Functionally, plays a central role in virus morphogenesis and assembly. Acts as a viroporin and self-assembles in host membranes forming pentameric protein-lipid pores that allow ion transport. Also plays a role in the induction of apoptosis. The chain is Envelope small membrane protein from Pipistrellus abramus (Japanese pipistrelle).